A 605-amino-acid polypeptide reads, in one-letter code: UvrABC system protein C (605 aa).

The 79-residue stretch at 14–92 (QSCGVYKMIG…IKSLKPSYNI (79 aa)) folds into the GIY-YIG domain. The 36-residue stretch at 202–237 (KEVQRQLFSTMEKCSREMNYELAAVYRDRLKFLQQI) folds into the UVR domain.

It belongs to the UvrC family. Interacts with UvrB in an incision complex.

The protein resides in the cytoplasm. Its function is as follows. The UvrABC repair system catalyzes the recognition and processing of DNA lesions. UvrC both incises the 5' and 3' sides of the lesion. The N-terminal half is responsible for the 3' incision and the C-terminal half is responsible for the 5' incision. In Wolbachia pipientis subsp. Culex pipiens (strain wPip), this protein is UvrABC system protein C.